Here is a 114-residue protein sequence, read N- to C-terminus: Small ribosomal subunit protein uS15 (114 aa).

Belongs to the universal ribosomal protein uS15 family.

This is Small ribosomal subunit protein uS15 (RpS13) from Musca domestica (House fly).